The sequence spans 135 residues: Galectin-1 (135 aa).

N-acetylalanine is present on A2. The 132-residue stretch at 4-135 folds into the Galectin domain; that stretch reads GLVASNLNLK…DFKIKCVAFD (132 aa). 2 positions are modified to N6-acetyllysine: K13 and K29. Residue S30 is modified to Phosphoserine. A beta-D-galactoside contacts are provided by residues 45-49, H53, N62, and 69-72; these read HFNPR and WGTE. Position 108 is an N6-acetyllysine; alternate (K108). K108 is subject to N6-succinyllysine; alternate. K128 bears the N6-acetyllysine mark.

In terms of assembly, homodimer. Binds LGALS3BP. Interacts with CD2, CD3, CD4, CD6, CD7, CD43, ALCAM and CD45. Interacts with laminin (via poly-N-acetyllactosamine). Interacts with SUSD2.

Its subcellular location is the secreted. The protein resides in the extracellular space. The protein localises to the extracellular matrix. In terms of biological role, lectin that binds beta-galactoside and a wide array of complex carbohydrates. Plays a role in regulating apoptosis, cell proliferation and cell differentiation. Inhibits CD45 protein phosphatase activity and therefore the dephosphorylation of Lyn kinase. Strong inducer of T-cell apoptosis. The chain is Galectin-1 (LGALS1) from Pongo abelii (Sumatran orangutan).